A 229-amino-acid chain; its full sequence is Probable transmembrane reductase CYB561D1 (229 aa).

Topologically, residues 1–24 (MQPLEVGLVPAPAGEPRLTRWLRR) are cytoplasmic. The 203-residue stretch at 22 to 224 (LRRGSGILAH…HQISRSYLPR (203 aa)) folds into the Cytochrome b561 domain. The helical transmembrane segment at 25–45 (GSGILAHLVALGFTIFLTALS) threads the bilayer. At 46–53 (RPGTSLFS) the chain is on the lumenal side. The chain crosses the membrane as a helical span at residues 54 to 74 (WHPVFMALAFCLCMAEAILLF). Residue H55 coordinates heme b. Topologically, residues 75–91 (SPEHSLFFFCSRKARIR) are cytoplasmic. Residues 92–112 (LHWAGQTLAILCAALGLGFII) traverse the membrane as a helical segment. Heme b-binding residues include H93 and H127. At 113-128 (SSRTRSELPHLVSWHS) the chain is on the lumenal side. The helical transmembrane segment at 129-149 (WVGALTLLATAVQALCGLCLL) threads the bilayer. The Cytoplasmic segment spans residues 150–169 (CPRAARVSRVARLKLYHLTC). H166 is a heme b binding site. The chain crosses the membrane as a helical span at residues 170 to 190 (GLVVYLMATVTVLLGMYSVWF). Over 191–193 (QAQ) the chain is Lumenal. Residues 194-214 (IKGAAWYLCLALPVYPALVIM) traverse the membrane as a helical segment. Topologically, residues 215 to 229 (HQISRSYLPRKKMEM) are cytoplasmic.

Heme b is required as a cofactor.

The protein resides in the membrane. The enzyme catalyses monodehydro-L-ascorbate radical(out) + L-ascorbate(in) = monodehydro-L-ascorbate radical(in) + L-ascorbate(out). It catalyses the reaction Fe(3+)(out) + L-ascorbate(in) = monodehydro-L-ascorbate radical(in) + Fe(2+)(out) + H(+). Functionally, probable transmembrane reductase that may use ascorbate as an electron donor and transfer electrons across membranes to reduce monodehydro-L-ascorbate radical and iron cations Fe(3+) in another cellular compartment. The polypeptide is Probable transmembrane reductase CYB561D1 (Homo sapiens (Human)).